A 156-amino-acid polypeptide reads, in one-letter code: Cell division protein SepF (156 aa).

The span at 23 to 36 (SYEKEQTDMKKQQD) shows a compositional bias: basic and acidic residues. Residues 23-48 (SYEKEQTDMKKQQDPPEQQDVTFPKA) form a disordered region. Residues 37–48 (PPEQQDVTFPKA) are compositionally biased toward polar residues.

This sequence belongs to the SepF family. In terms of assembly, homodimer. Interacts with FtsZ.

It is found in the cytoplasm. Cell division protein that is part of the divisome complex and is recruited early to the Z-ring. Probably stimulates Z-ring formation, perhaps through the cross-linking of FtsZ protofilaments. Its function overlaps with FtsA. In Bacillus cereus (strain ATCC 10987 / NRS 248), this protein is Cell division protein SepF.